Here is a 327-residue protein sequence, read N- to C-terminus: GMP reductase (327 aa).

Cys-175 functions as the Thioimidate intermediate in the catalytic mechanism. 204 to 227 contacts NADP(+); it reads IIADGGIRTHGDVAKSIRFGATMV.

Belongs to the IMPDH/GMPR family. GuaC type 2 subfamily.

The enzyme catalyses IMP + NH4(+) + NADP(+) = GMP + NADPH + 2 H(+). Catalyzes the irreversible NADPH-dependent deamination of GMP to IMP. It functions in the conversion of nucleobase, nucleoside and nucleotide derivatives of G to A nucleotides, and in maintaining the intracellular balance of A and G nucleotides. The chain is GMP reductase from Bacillus thuringiensis subsp. konkukian (strain 97-27).